Here is a 191-residue protein sequence, read N- to C-terminus: Prophage tail fiber assembly protein homolog TfaR (191 aa).

The protein belongs to the tfa family.

This chain is Prophage tail fiber assembly protein homolog TfaR (tfaR), found in Escherichia coli (strain K12).